A 993-amino-acid chain; its full sequence is MLSEQGLLSDCGNNYFQMTSCILSGSIQTTPQVSAGGSEAKPLIFTFVPTVRRLPTHTQLADTSKFLVKIPEESSDKSPETVNRSKSNDYLTLNAGSQQERDQAKLTCPSEVSGTILQEREFEANKLQGMQQSDLFKAEYVLIVDSEGEDEAASRKVEQGPPGGIGTAAVRPKSLAISSSLVSDVVRPKTQGTDLKTSSHPEMLHGMAPQQKHGQLTSSPTTSEQLACKPPAFSFVSPTNPNTPPDPVNLEGASVLEEFHTRRLDVGGAVVEESATYFQTTAHSTPFSASKGTSSTLLFPHSTQLSGSNLPSSTAADPKPGLTSEVLKKTTLTSHVLSHGESPRTSSSPPSSSASLKSNSASYIPVRIVTHSLSPSPKPFTSSFHGSSSTICSQMSSSGNLSKSGVKSPVPSRLALLTAILKSNPSHQRPFSPASCPTFSLNSPASSTLTLDQKEKQTPPTPKKSLSSCSLRAGSPDQGELQVSELTQQSFHLPVFTKSTPLSQAPSLSPTKQASSSLASMNVERTPSPTLKSNTMLSLLQTSTSSSVGLPPVPPSSSLSSLKSKQDGDLRGPENPRNIHTYPSTLASSALSSLSPPINQRATFSSSEKCFHPSPALSSLINRSKRASSQLSGQELNPSALPSLPVSSADFASLPNLRSSSLPHANLPTLVPQLSPSALHPHCGSGTLPSRLGKSESTTPNHRSPVSTPSLPISLTRTEELISPCALSMSTGPENKKSKQYKTKSSYKAFAAIPTNTLLLEQKALDEPAKTESVSKDNTLEPPVELYFPAQLRQQTEELCATIDKVLQDSLSMHSSDSPSRSPKTLLGSDTVKTPTTLPRAAGRETKYANLSSPSSTVSESQLTKPGVIRPVPVKSRILLKKEEEVYEPNPFSKYLEDNSDLFSEQDVTVPPKPVSLHPLYQTKLYPPAKSLLHPQTLSHADCLAPGPFSHLSFSLSDEQENSHTLLSHNACNKLSHPMVAIPEHEALDSKEQ.

The segment at 1 to 51 (MLSEQGLLSDCGNNYFQMTSCILSGSIQTTPQVSAGGSEAKPLIFTFVPTV) is interaction with LMNA. The tract at residues 71 to 90 (PEESSDKSPETVNRSKSNDY) is disordered. Over residues 80-90 (ETVNRSKSNDY) the composition is skewed to polar residues. Serine 146 carries the post-translational modification Phosphoserine. Disordered stretches follow at residues 152–171 (AASR…AAVR), 186–225 (VRPK…TSEQ), 231–250 (PAFS…PVNL), 300–322 (PHST…KPGL), 334–358 (SHVL…SLKS), 443–481 (SPAS…QGEL), 500–582 (TPLS…IHTY), 677–711 (SALH…TPSL), and 811–864 (LSMH…SQLT). Residues 161 to 837 (PPGGIGTAAV…GSDTVKTPTT (677 aa)) form a required for interaction with ISL1 region. The span at 212 to 225 (KHGQLTSSPTTSEQ) shows a compositional bias: polar residues. The segment covering 300–315 (PHSTQLSGSNLPSSTA) has biased composition (polar residues). A compositionally biased stretch (low complexity) spans 343 to 358 (PRTSSSPPSSSASLKS). A compositionally biased stretch (polar residues) spans 500-532 (TPLSQAPSLSPTKQASSSLASMNVERTPSPTLK). Low complexity predominate over residues 533 to 563 (SNTMLSLLQTSTSSSVGLPPVPPSSSLSSLK). Positions 564 to 574 (SKQDGDLRGPE) are enriched in basic and acidic residues. Residues 695–711 (SESTTPNHRSPVSTPSL) are compositionally biased toward polar residues. The span at 811 to 822 (LSMHSSDSPSRS) shows a compositional bias: low complexity. Serine 818 is modified (phosphoserine). The span at 849–864 (ANLSSPSSTVSESQLT) shows a compositional bias: polar residues.

As to quaternary structure, directly interacts with LMNA. Interacts with ISL1 (via N-terminal domain); the interaction represses ISL1 transactivator activity. Interactions of ISL1 with MLIP1 and GCN5/KAT2A may be mutually exclusive. Predominantly expressed in the heart and skeletal muscle. Also detected in liver. In terms of tissue distribution, expressed in skeletal muscle.

It is found in the nucleus. The protein localises to the nucleus envelope. The protein resides in the PML body. It localises to the cytoplasm. Its subcellular location is the cytosol. It is found in the cell membrane. The protein localises to the sarcolemma. Its function is as follows. Required for myoblast differentiation into myotubes, possibly acting as a transcriptional regulator of the myogenic program. Required for cardiac adaptation to stress through integrated regulation of the AKT/mTOR pathways and FOXO1. Regulates cardiac homeostasis and plays a role in the protection against cardiac hypertrophy. Binds chromatin. May act as a transcriptional cofactor for ISL1, repressing its transcriptional activity. May also repress MYOCD transcriptional activity. The chain is Muscular LMNA-interacting protein from Homo sapiens (Human).